The following is a 483-amino-acid chain: Trigger factor (483 aa).

Residues 162–243 (GDYVSLDLSA…VRGVKEKELP (82 aa)) form the PPIase FKBP-type domain. The segment at 459–483 (AVAPGDGDATVEPVEPVEAETDGNG) is disordered. The span at 473 to 483 (EPVEAETDGNG) shows a compositional bias: acidic residues.

The protein belongs to the FKBP-type PPIase family. Tig subfamily.

The protein resides in the cytoplasm. It catalyses the reaction [protein]-peptidylproline (omega=180) = [protein]-peptidylproline (omega=0). Involved in protein export. Acts as a chaperone by maintaining the newly synthesized protein in an open conformation. Functions as a peptidyl-prolyl cis-trans isomerase. This is Trigger factor from Frankia casuarinae (strain DSM 45818 / CECT 9043 / HFP020203 / CcI3).